Here is a 185-residue protein sequence, read N- to C-terminus: Ribosome-recycling factor (185 aa).

This sequence belongs to the RRF family.

It localises to the cytoplasm. Its function is as follows. Responsible for the release of ribosomes from messenger RNA at the termination of protein biosynthesis. May increase the efficiency of translation by recycling ribosomes from one round of translation to another. In Bacillus cereus (strain G9842), this protein is Ribosome-recycling factor.